Consider the following 152-residue polypeptide: Deoxyuridine 5'-triphosphate nucleotidohydrolase (152 aa).

Substrate contacts are provided by residues arginine 72–glycine 74, asparagine 85, threonine 89–aspartate 91, and lysine 99.

The protein belongs to the dUTPase family. The cofactor is Mg(2+).

It carries out the reaction dUTP + H2O = dUMP + diphosphate + H(+). The protein operates within pyrimidine metabolism; dUMP biosynthesis; dUMP from dCTP (dUTP route): step 2/2. This enzyme is involved in nucleotide metabolism: it produces dUMP, the immediate precursor of thymidine nucleotides and it decreases the intracellular concentration of dUTP so that uracil cannot be incorporated into DNA. In Bradyrhizobium diazoefficiens (strain JCM 10833 / BCRC 13528 / IAM 13628 / NBRC 14792 / USDA 110), this protein is Deoxyuridine 5'-triphosphate nucleotidohydrolase.